The primary structure comprises 397 residues: 1-carboxy-3-chloro-3,4-dihydroxycyclo hexa-1,5-diene dehydrogenase (397 aa).

This sequence to P.putida PHT4.

The polypeptide is 1-carboxy-3-chloro-3,4-dihydroxycyclo hexa-1,5-diene dehydrogenase (cbaC) (Comamonas testosteroni (Pseudomonas testosteroni)).